The following is a 311-amino-acid chain: MFKKWLQPSNEELIKAIYVKNEAEAQKLIAKMDILELSKIYIDNTALIWAVDKGLEKVCEMLIPKMSEQAINHVTNNGNTALTLAASKGLEKICELLIPKMSPQAINHVTDNGNTALTWAAWKDLEKICEMLIPKMSPQAINQVTNNGNTALILAAWKGLEKICKILIPKMFEQAINQVTNKGCTALTLAADKDLKKIYELLINKMSIDAINHTLTSSHKEVKKFIQEKISYNNILAEKLALFLKESFLGKGKDNINNFVKMISAAKFYKIVNKKLLTEYLQKQEVDNSKFIIEEMNNFIKTHSFTIARIC.

ANK repeat units lie at residues 42–71, 77–106, 112–141, 147–176, and 182–213; these read IDNTALIWAVDKGLEKVCEMLIPKMSEQAI, NGNTALTLAASKGLEKICELLIPKMSPQAI, NGNTALTWAAWKDLEKICEMLIPKMSPQAI, NGNTALILAAWKGLEKICKILIPKMFEQAI, and KGCTALTLAADKDLKKIYELLINKMSIDAINH.

This chain is Putative ankyrin repeat protein RF_0923, found in Rickettsia felis (strain ATCC VR-1525 / URRWXCal2) (Rickettsia azadi).